Reading from the N-terminus, the 399-residue chain is Dual-specificity RNA methyltransferase RlmN (399 aa).

The active-site Proton acceptor is Glu122. The Radical SAM core domain occupies Glu128–Leu371. Cys135 and Cys374 are disulfide-bonded. [4Fe-4S] cluster contacts are provided by Cys142, Cys146, and Cys149. S-adenosyl-L-methionine contacts are provided by residues Gly200–Glu201, Ser232, Ser254–His256, and Asn331. Cys374 acts as the S-methylcysteine intermediate in catalysis.

This sequence belongs to the radical SAM superfamily. RlmN family. [4Fe-4S] cluster serves as cofactor.

It is found in the cytoplasm. It carries out the reaction adenosine(2503) in 23S rRNA + 2 reduced [2Fe-2S]-[ferredoxin] + 2 S-adenosyl-L-methionine = 2-methyladenosine(2503) in 23S rRNA + 5'-deoxyadenosine + L-methionine + 2 oxidized [2Fe-2S]-[ferredoxin] + S-adenosyl-L-homocysteine. The catalysed reaction is adenosine(37) in tRNA + 2 reduced [2Fe-2S]-[ferredoxin] + 2 S-adenosyl-L-methionine = 2-methyladenosine(37) in tRNA + 5'-deoxyadenosine + L-methionine + 2 oxidized [2Fe-2S]-[ferredoxin] + S-adenosyl-L-homocysteine. Functionally, specifically methylates position 2 of adenine 2503 in 23S rRNA and position 2 of adenine 37 in tRNAs. m2A2503 modification seems to play a crucial role in the proofreading step occurring at the peptidyl transferase center and thus would serve to optimize ribosomal fidelity. This is Dual-specificity RNA methyltransferase RlmN from Rhodopseudomonas palustris (strain ATCC BAA-98 / CGA009).